The sequence spans 835 residues: Ribonucleoside-diphosphate reductase large subunit (835 aa).

The interval 1–39 (MPPRAPRPAGAVSPPFPPLAGPPLKARAPRARDSPLTSP) is disordered. Substrate contacts are provided by residues T262, 277–278 (SC), G308, 489–493 (NLCTE), and 666–670 (PTVSS). A disulfide bridge links C278 with C506. N489 (proton acceptor) is an active-site residue. The active-site Cysteine radical intermediate is the C491. E493 acts as the Proton acceptor in catalysis.

Belongs to the ribonucleoside diphosphate reductase large chain family. As to quaternary structure, heterotetramer composed of a homodimer of the large subunit (R1) and a homodimer of the small subunit (R2). Larger multisubunit protein complex are also active, composed of (R1)n(R2)n.

The catalysed reaction is a 2'-deoxyribonucleoside 5'-diphosphate + [thioredoxin]-disulfide + H2O = a ribonucleoside 5'-diphosphate + [thioredoxin]-dithiol. Functionally, ribonucleoside-diphosphate reductase holoenzyme provides the precursors necessary for viral DNA synthesis. Allows virus growth in non-dividing cells, as well as reactivation from latency in infected hosts. Catalyzes the biosynthesis of deoxyribonucleotides from the corresponding ribonucleotides. The sequence is that of Ribonucleoside-diphosphate reductase large subunit from Suid herpesvirus 1 (strain Kaplan) (SuHV-1).